The primary structure comprises 221 residues: Oxaloacetate tautomerase FAHD1, mitochondrial (221 aa).

The transit peptide at methionine 1–tyrosine 24 directs the protein to the mitochondrion. At serine 37 the chain carries Phosphoserine. Residues glutamate 68, glutamate 70, and aspartate 99 each contribute to the Mg(2+) site. Lysine 110 carries the post-translational modification N6-acetyllysine. Position 112 is an N6-succinyllysine (lysine 112).

The protein belongs to the FAH family. As to quaternary structure, homodimer. It depends on Mg(2+) as a cofactor. Mn(2+) is required as a cofactor.

It localises to the mitochondrion. It is found in the cytoplasm. The protein localises to the cytosol. It catalyses the reaction oxaloacetate = enol-oxaloacetate. It carries out the reaction oxaloacetate + H(+) = pyruvate + CO2. The enzyme catalyses a 3-acylpyruvate + H2O = a carboxylate + pyruvate + H(+). The catalysed reaction is acetylpyruvate + H2O = acetate + pyruvate + H(+). It catalyses the reaction 3-fumarylpyruvate + H2O = fumarate + pyruvate + H(+). With respect to regulation, oxaloacetate decarboxylation is competitively inhibited by oxalate. Functionally, tautomerase that converts enol-oxaloacetate, a strong inhibitor of succinate dehydrogenase, to the physiological keto form of oxaloacetate. It is thereby required to maximize aerobic respiration efficiency by preventing succinate dehydrogenase inhibition. Also acts as a weak oxaloacetate decarboxylase (ODx), catalyzing the decarboxylation of oxaloacetate (OAA) to pyruvate and CO(2), and as such is likely a regulatory enzyme in the TCA cycle. Also displays acylpyruvase activity, being able to hydrolyze acetylpyruvate and fumarylpyruvate in vitro. The chain is Oxaloacetate tautomerase FAHD1, mitochondrial (FAHD1) from Pongo abelii (Sumatran orangutan).